The primary structure comprises 106 residues: Large ribosomal subunit protein uL24 (106 aa).

It belongs to the universal ribosomal protein uL24 family. In terms of assembly, part of the 50S ribosomal subunit.

Its function is as follows. One of two assembly initiator proteins, it binds directly to the 5'-end of the 23S rRNA, where it nucleates assembly of the 50S subunit. One of the proteins that surrounds the polypeptide exit tunnel on the outside of the subunit. In Acidiphilium cryptum (strain JF-5), this protein is Large ribosomal subunit protein uL24.